We begin with the raw amino-acid sequence, 284 residues long: Bifunctional protein FolD (284 aa).

NADP(+) contacts are provided by residues 165-167 (GAS), S190, and I231.

The protein belongs to the tetrahydrofolate dehydrogenase/cyclohydrolase family. Homodimer.

The catalysed reaction is (6R)-5,10-methylene-5,6,7,8-tetrahydrofolate + NADP(+) = (6R)-5,10-methenyltetrahydrofolate + NADPH. It catalyses the reaction (6R)-5,10-methenyltetrahydrofolate + H2O = (6R)-10-formyltetrahydrofolate + H(+). The protein operates within one-carbon metabolism; tetrahydrofolate interconversion. Its function is as follows. Catalyzes the oxidation of 5,10-methylenetetrahydrofolate to 5,10-methenyltetrahydrofolate and then the hydrolysis of 5,10-methenyltetrahydrofolate to 10-formyltetrahydrofolate. The polypeptide is Bifunctional protein FolD (Polynucleobacter asymbioticus (strain DSM 18221 / CIP 109841 / QLW-P1DMWA-1) (Polynucleobacter necessarius subsp. asymbioticus)).